A 155-amino-acid polypeptide reads, in one-letter code: Regulatory protein RecX (155 aa).

This sequence belongs to the RecX family.

Its subcellular location is the cytoplasm. Its function is as follows. Modulates RecA activity. This is Regulatory protein RecX from Pseudomonas fluorescens (strain SBW25).